The following is a 977-amino-acid chain: Mast/stem cell growth factor receptor Kit (977 aa).

A signal peptide spans 1–25 (MRGARGAWDFLFVLLLLLLVQTGSS). Residues 26–525 (QPSVSPGELS…QIHAHTLFTP (500 aa)) lie on the Extracellular side of the membrane. 5 consecutive Ig-like C2-type domains span residues 27 to 112 (PSVS…VFVR), 121 to 205 (DLPL…LKVR), 212 to 309 (PVVS…LEVV), 318 to 411 (PMMN…VYVN), and 414 to 508 (PEIL…FNFA). Cys58 and Cys97 are oxidised to a cystine. Asn94, Asn130, and Asn145 each carry an N-linked (GlcNAc...) asparagine glycan. Cystine bridges form between Cys136–Cys186, Cys151–Cys183, and Cys233–Cys291. N-linked (GlcNAc...) asparagine glycans are attached at residues Asn284, Asn294, Asn301, Asn321, Asn353, Asn368, Asn401, Asn464, and Asn487. An intrachain disulfide couples Cys429 to Cys492. Residues 526–546 (LLIGFVIAAGLMCIFVMILTY) form a helical membrane-spanning segment. Over 547–977 (KYLQKPMYEV…TQPLLVHEDV (431 aa)) the chain is Cytoplasmic. Tyr548 and Tyr554 each carry phosphotyrosine. Residue Tyr569 coordinates Mg(2+). A phosphotyrosine; by autocatalysis mark is found at Tyr569 and Tyr571. Positions 569–571 (YVY) are important for interaction with phosphotyrosine-binding proteins. A Protein kinase domain is found at 590-938 (LSFGKTLGAG…ISESTNHIYS (349 aa)). Residues 597–604 (GAGAFGKV), Lys624, and 672–678 (EYCCYGD) contribute to the ATP site. Phosphotyrosine; by autocatalysis occurs at positions 704 and 722. At Tyr731 the chain carries Phosphotyrosine. A phosphoserine; by PKC/PRKCA mark is found at Ser742 and Ser747. The active-site Proton acceptor is the Asp793. An ATP-binding site is contributed by Arg797. Residues Asn798 and Asp811 each coordinate Mg(2+). Ser822 carries the post-translational modification Phosphoserine. A Phosphotyrosine; by autocatalysis modification is found at Tyr824. Ser892 carries the post-translational modification Phosphoserine. Tyr901 is modified (phosphotyrosine). The residue at position 937 (Tyr937) is a Phosphotyrosine; by autocatalysis. Ser960 is subject to Phosphoserine.

It belongs to the protein kinase superfamily. Tyr protein kinase family. CSF-1/PDGF receptor subfamily. Monomer in the absence of bound KITLG/SCF. Homodimer in the presence of bound KITLG/SCF, forming a heterotetramer with two KITLG/SCF molecules. Interacts (via phosphorylated tyrosine residues) with the adapter proteins GRB2 and GRB7 (via SH2 domain), and SH2B2/APS. Interacts (via C-terminus) with MPDZ (via the tenth PDZ domain). Interacts (via phosphorylated tyrosine residues) with PIK3R1 and PIK3CD. Interacts (via phosphorylated tyrosine) with CRK (isoform Crk-II), FYN, SHC1 and MATK/CHK (via SH2 domain). Interacts with LYN and FES/FPS. Interacts (via phosphorylated tyrosine residues) with the protein phosphatases PTPN6/SHP-1 (via SH2 domain), PTPN11/SHP-2 (via SH2 domain) and PTPRU. Interacts with PLCG1. Interacts with DOK1 and TEC. Interacts with IL1RAP (independent of stimulation with KITLG/SCF). A mast cell-specific KITLG/SCF-induced interleukin-33 signaling complex contains IL1RL1, IL1RAP, KIT and MYD88. Post-translationally, ubiquitinated by SOCS6. KIT is rapidly ubiquitinated after autophosphorylation induced by KITLG/SCF binding, leading to internalization and degradation. Autophosphorylated on tyrosine residues. KITLG/SCF binding promotes autophosphorylation. Phosphorylated tyrosine residues are important for interaction with specific binding partners.

It is found in the cell membrane. The catalysed reaction is L-tyrosyl-[protein] + ATP = O-phospho-L-tyrosyl-[protein] + ADP + H(+). Present in an inactive conformation in the absence of bound ligand. KITLG/SCF binding leads to dimerization and activation by autophosphorylation on tyrosine residues. Activity is down-regulated by PRKCA-mediated phosphorylation on serine residues. In terms of biological role, tyrosine-protein kinase that acts as a cell-surface receptor for the cytokine KITLG/SCF and plays an essential role in the regulation of cell survival and proliferation, hematopoiesis, stem cell maintenance, gametogenesis, mast cell development, migration and function, and in melanogenesis. In response to KITLG/SCF binding, KIT can activate several signaling pathways. Phosphorylates PIK3R1, PLCG1, SH2B2/APS and CBL. Activates the AKT1 signaling pathway by phosphorylation of PIK3R1, the regulatory subunit of phosphatidylinositol 3-kinase. Activated KIT also transmits signals via GRB2 and activation of RAS, RAF1 and the MAP kinases MAPK1/ERK2 and/or MAPK3/ERK1. Promotes activation of STAT family members STAT1, STAT3, STAT5A and STAT5B. Activation of PLCG1 leads to the production of the cellular signaling molecules diacylglycerol and inositol 1,4,5-trisphosphate. KIT signaling is modulated by protein phosphatases, and by rapid internalization and degradation of the receptor. Activated KIT promotes phosphorylation of the protein phosphatases PTPN6/SHP-1 and PTPRU, and of the transcription factors STAT1, STAT3, STAT5A and STAT5B. Promotes phosphorylation of PIK3R1, CBL, CRK (isoform Crk-II), LYN, MAPK1/ERK2 and/or MAPK3/ERK1, PLCG1, SRC and SHC1. The polypeptide is Mast/stem cell growth factor receptor Kit (KIT) (Bos taurus (Bovine)).